Reading from the N-terminus, the 456-residue chain is MISPTMEQGESLRIRVVMGKDRISELPDGLLLKILSSLPTNIVVATSVLSKQWRSLWKLVPNLEFDSDDYESEHYTFSEIVCKSFLSHKAPVLESFRLKFVNFNPVDIGLWVGIAFSRHLRELVLDFYPAELGKGVTFTFPSSLCTCNTLETLKLVLCILVDIPSPVLMKSLRTLHLEFVRYKDESSVRNLLSGCPGLEELRLYRGDDSDIKVFTIEVPSLQRLTIHDNNDGPEFWGYVINAPFLKYLLIEELRCPEFCLNAPELVEANIAEVTSITIEKFLGSFTSVSRLLLNLSPLKITYPTGSMFYQLVSLEMYTREAEWWNLLTLMLENSPKLQVLKLTDRSQNFHKDGLVSGKWNEPKDVPECLLSQLETFVWRRFDWGREEEKEIATYILKNGRRLKKATFSTNPIESEELNKLKERRKVLNGLDGVVRASNSCQLVFKFDPSYLGSDSP.

One can recognise an F-box domain in the interval 20–73 (KDRISELPDGLLLKILSSLPTNIVVATSVLSKQWRSLWKLVPNLEFDSDDYESE). LRR repeat units follow at residues 74 to 100 (HYTFSEIVCKSFLSHKAPVLESFRLKF), 102 to 127 (NFNPVDIGLWVGIAFSRHLRELVLDF), 152 to 179 (TLKLVLCILVDIPSPVLMKSLRTLHLEF), 180 to 205 (VRYKDESSVRNLLSGCPGLEELRLYR), 225 to 252 (TIHDNNDGPEFWGYVINAPFLKYLLIEE), 270 to 295 (IAEVTSITIEKFLGSFTSVSRLLLNL), and 318 to 344 (TREAEWWNLLTLMLENSPKLQVLKLTD). One can recognise an FBD domain in the interval 358–409 (KWNEPKDVPECLLSQLETFVWRRFDWGREEEKEIATYILKNGRRLKKATFST).

This is F-box/FBD/LRR-repeat protein At3g52680 from Arabidopsis thaliana (Mouse-ear cress).